Consider the following 555-residue polypeptide: Glucose-6-phosphate isomerase (555 aa).

E356 functions as the Proton donor in the catalytic mechanism. Catalysis depends on residues H387 and K515.

This sequence belongs to the GPI family.

It is found in the cytoplasm. It carries out the reaction alpha-D-glucose 6-phosphate = beta-D-fructose 6-phosphate. It functions in the pathway carbohydrate biosynthesis; gluconeogenesis. It participates in carbohydrate degradation; glycolysis; D-glyceraldehyde 3-phosphate and glycerone phosphate from D-glucose: step 2/4. In terms of biological role, catalyzes the reversible isomerization of glucose-6-phosphate to fructose-6-phosphate. This chain is Glucose-6-phosphate isomerase, found in Desulforapulum autotrophicum (strain ATCC 43914 / DSM 3382 / VKM B-1955 / HRM2) (Desulfobacterium autotrophicum).